Here is a 194-residue protein sequence, read N- to C-terminus: ATP-dependent Clp protease proteolytic subunit 3 (194 aa).

The active-site Nucleophile is the Ser-96. Residue His-121 is part of the active site.

This sequence belongs to the peptidase S14 family. In terms of assembly, fourteen ClpP subunits assemble into 2 heptameric rings which stack back to back to give a disk-like structure with a central cavity, resembling the structure of eukaryotic proteasomes.

The protein resides in the cytoplasm. The catalysed reaction is Hydrolysis of proteins to small peptides in the presence of ATP and magnesium. alpha-casein is the usual test substrate. In the absence of ATP, only oligopeptides shorter than five residues are hydrolyzed (such as succinyl-Leu-Tyr-|-NHMec, and Leu-Tyr-Leu-|-Tyr-Trp, in which cleavage of the -Tyr-|-Leu- and -Tyr-|-Trp bonds also occurs).. Functionally, cleaves peptides in various proteins in a process that requires ATP hydrolysis. Has a chymotrypsin-like activity. Plays a major role in the degradation of misfolded proteins. The polypeptide is ATP-dependent Clp protease proteolytic subunit 3 (Rhizobium johnstonii (strain DSM 114642 / LMG 32736 / 3841) (Rhizobium leguminosarum bv. viciae)).